The primary structure comprises 627 residues: WPP domain-interacting tail-anchored protein 2 (627 aa).

Coiled coils occupy residues 81 to 152, 188 to 218, and 312 to 542; these read CGIL…RRTL, LEKSLSRELELEKKLMEFQQNEEQLKLKLHY, and TLRE…KILR. Positions 577 to 597 are disordered; sequence SLQEDERTREEPEKQSVSEKS. The span at 580–597 shows a compositional bias: basic and acidic residues; the sequence is EDERTREEPEKQSVSEKS. Residues 606–626 form a helical membrane-spanning segment; the sequence is LKHILVVALVFVLFCSFFGVT.

As to quaternary structure, component of Ran complexes at least composed of WIT1 or WIT2, RANGAP1 or RANGAP2, and WIP1 or WIP2 or WIP3. Interacts with KAKU1. Core component of the LINC complex which is composed of inner nuclear membrane SUN domain-containing proteins coupled to outer nuclear membrane WIP and WIT proteins. The LINC complex also involves nucleoskeletal proteins CRWN/LINC and possibly KAKU4 and the cytoskeletal myosin KAKU1. Interacts with WIP1, WIP2 and WIP3. As to expression, ubiquitous.

The protein localises to the membrane. Together with WIT1, required for the nuclear envelope docking of RANGAP proteins in root tips. Plays a role in nuclear shape determination. As component of the SUN-WIP-WIT2-KAKU1 complex, mediates the transfer of cytoplasmic forces to the nuclear envelope (NE), leading to nuclear shape changes. This chain is WPP domain-interacting tail-anchored protein 2 (WIT2), found in Arabidopsis thaliana (Mouse-ear cress).